The following is a 404-amino-acid chain: Putative aspartate aminotransferase, cytoplasmic 2 (404 aa).

Residue K249 is modified to N6-(pyridoxal phosphate)lysine.

This sequence belongs to the class-I pyridoxal-phosphate-dependent aminotransferase family. Homodimer. It depends on pyridoxal 5'-phosphate as a cofactor.

Its subcellular location is the cytoplasm. The catalysed reaction is L-aspartate + 2-oxoglutarate = oxaloacetate + L-glutamate. In Mus musculus (Mouse), this protein is Putative aspartate aminotransferase, cytoplasmic 2 (Got1l1).